A 360-amino-acid polypeptide reads, in one-letter code: tRNA pseudouridine synthase D (360 aa).

The active-site Nucleophile is aspartate 76. Residues 151-332 (GMPNFFGYQR…HGIYKEKNAW (182 aa)) form the TRUD domain.

Belongs to the pseudouridine synthase TruD family.

It catalyses the reaction uridine(13) in tRNA = pseudouridine(13) in tRNA. Responsible for synthesis of pseudouridine from uracil-13 in transfer RNAs. This chain is tRNA pseudouridine synthase D, found in Nitratiruptor sp. (strain SB155-2).